Consider the following 298-residue polypeptide: Protoheme IX farnesyltransferase (298 aa).

Helical transmembrane passes span 29-49, 51-71, 97-117, 120-140, 148-168, 175-195, 221-241, 243-263, and 278-298; these read LIVF…PPLL, FGVA…LNCL, ETVT…HGFI, LTMW…TLIL, IVIG…AMTG, LVLF…LACY, ILWY…LGMS, GFYL…AIAL, and YSIL…LIVL.

The protein belongs to the UbiA prenyltransferase family. Protoheme IX farnesyltransferase subfamily.

Its subcellular location is the cell inner membrane. The enzyme catalyses heme b + (2E,6E)-farnesyl diphosphate + H2O = Fe(II)-heme o + diphosphate. Its pathway is porphyrin-containing compound metabolism; heme O biosynthesis; heme O from protoheme: step 1/1. Its function is as follows. Converts heme B (protoheme IX) to heme O by substitution of the vinyl group on carbon 2 of heme B porphyrin ring with a hydroxyethyl farnesyl side group. The chain is Protoheme IX farnesyltransferase from Dechloromonas aromatica (strain RCB).